Reading from the N-terminus, the 337-residue chain is L-Ala-D/L-amino acid epimerase (337 aa).

Residues threonine 129 and 151-153 (KIK) contribute to the substrate site. 3 residues coordinate Mg(2+): aspartate 177, glutamate 203, and aspartate 228. Substrate is bound by residues lysine 250 and 300–302 (DMD).

The protein belongs to the mandelate racemase/muconate lactonizing enzyme family. The cofactor is Mg(2+).

Functionally, broad specificity dipeptide epimerase. Catalyzes the epimerization of L-Ala-L-Ala, L-Ala-L-Glu, L-Ala-L-Ser, L-Ala-L-Thr and L-Ala-L-Met (in vitro). The protein is L-Ala-D/L-amino acid epimerase of Maribacter sp. (strain HTCC2170 / KCCM 42371).